Reading from the N-terminus, the 519-residue chain is 2,3-bisphosphoglycerate-independent phosphoglycerate mutase (519 aa).

Mn(2+)-binding residues include aspartate 9 and serine 60. Catalysis depends on serine 60, which acts as the Phosphoserine intermediate. Residues 76-91 (DSARVSDSIARSRGEA) are compositionally biased toward basic and acidic residues. Positions 76 to 102 (DSARVSDSIARSRGEAPPDDDAQDPPF) are disordered. Residues histidine 134, 163–164 (RD), arginine 195, arginine 201, 267–270 (RSDR), and lysine 341 each bind substrate. Aspartate 408, histidine 412, aspartate 449, histidine 450, and histidine 466 together coordinate Mn(2+).

This sequence belongs to the BPG-independent phosphoglycerate mutase family. The cofactor is Mn(2+).

The enzyme catalyses (2R)-2-phosphoglycerate = (2R)-3-phosphoglycerate. It functions in the pathway carbohydrate degradation; glycolysis; pyruvate from D-glyceraldehyde 3-phosphate: step 3/5. In terms of biological role, catalyzes the interconversion of 2-phosphoglycerate and 3-phosphoglycerate. This Haloarcula marismortui (strain ATCC 43049 / DSM 3752 / JCM 8966 / VKM B-1809) (Halobacterium marismortui) protein is 2,3-bisphosphoglycerate-independent phosphoglycerate mutase.